Here is a 131-residue protein sequence, read N- to C-terminus: Inactive protein FON2 SPARE1 (131 aa).

The disordered stretch occupies residues 67-131 (SPSSLTTTDR…VPTGPNPLHH (65 aa)). The segment covering 76–97 (RHHHHHRHHGHHHHRGHDRWNR) has biased composition (basic residues).

The protein belongs to the CLV3/ESR signal peptide family. Expressed in all aerial apical meristems, including the floral and inflorescence meristems in the reproductive phase and the shoot apical meristem in the vegetative phase. Also detected in the primordia of lateral organs such as the leaf and the floral organs.

Functionally, non functional suppressor of the fon2 mutation. In Oryza sativa subsp. japonica, the protein has a single amino acid substitution at the putative processing site of the signal peptide while in all the other varieties/species of domesticated and wild rice tested the protein is functional. The polypeptide is Inactive protein FON2 SPARE1 (FOS1) (Oryza sativa subsp. japonica (Rice)).